Here is a 305-residue protein sequence, read N- to C-terminus: MTWLPLNPIPLKDRVSMIFLQYGQIDVIDGAFVLIDKTGIRTHIPVGSVACIMLEPGTRVSHAAVRLAAQVGTLLVWVGEAGVRVYASGQPGGARSDKLLYQAKLALDEDLRLKVVRKMFELRFGEPAPARRSVEQLRGIEGSRVRATYALLAKQYGVTWNGRRYDPKDWEKGDTINQCISAATSCLYGVTEAAILAAGYAPAIGFVHTGKPLSFVYDIADIIKFDTVVPKAFEIARRNPGEPDREVRLACRDIFRSSKTLAKLIPLIEDVLAAGEIQPPAPPEDAQPVAIPLPVSLGDAGHRSS.

A sufficient for cleavage of ssRNA, ssDNA and Holliday junction DNA region spans residues 96–278 (SDKLLYQAKL…EDVLAAGEIQ (183 aa)). Mg(2+) contacts are provided by glutamate 141, histidine 208, and aspartate 221. The tract at residues 278 to 305 (QPPAPPEDAQPVAIPLPVSLGDAGHRSS) is disordered.

The protein belongs to the CRISPR-associated endonuclease Cas1 family. As to quaternary structure, homodimer. Part of the Cas1-Cas2 complex. Interacts with RecB, RecC, RuvB, CasC and CasE. Forms a hexamer with 2 Cas1 dimers sandwiching a Cas2 dimer. The DNA lies across a flat surface extending from 1 Cas1 dimer, across the Cas2 dimer and contacting the other Cas1 dimer. Only 1 Cas1 protein from each dimer is catalytic, the other interacts with the Cas2 dimer and possibly target DNA. Mg(2+) is required as a cofactor.

It localises to the cytoplasm. Nuclease activity partially inhibited by CasE. In terms of biological role, CRISPR (clustered regularly interspaced short palindromic repeat), is an adaptive immune system that provides protection against mobile genetic elements (viruses, transposable elements and conjugative plasmids). CRISPR clusters contain sequences complementary to antecedent mobile elements and target invading nucleic acids. CRISPR clusters are transcribed and processed into CRISPR RNA (crRNA). The Cas1-Cas2 complex is involved in CRISPR adaptation, the first stage of CRISPR immunity, being required for the addition/removal of CRISPR spacers at the leader end of the CRISPR locus. The Cas1-Cas2 complex introduces staggered nicks into both strands of the CRISPR array near the leader repeat and joins the 5'-ends of the repeat strands with the 3'-ends of the new spacer sequence. Spacer DNA integration requires supercoiled target DNA and 3'-OH ends on the inserted (spacer) DNA and probably initiates with a nucleophilic attack of the C 3'-OH end of the protospacer on the minus strand of the first repeat sequence. Expression of Cas1-Cas2 in a strain lacking both genes permits spacer acquisition. Non-specifically binds DNA; the Cas1-Cas2 complex preferentially binds CRISPR-locus DNA. Highest binding is seen to a dual forked DNA complex with 3'-overhangs and a protospacer-adjacent motif-complement specifically positioned. The protospacer DNA lies across a flat surface extending from 1 Cas1 dimer, across the Cas2 dimer and contacting the other Cas1 dimer; the 23 bp-long ds section of the DNA is bracketed by 1 Tyr-22 from each of the Cas1 dimers. Cas1 cuts within the 3'-overhang, to generate a 33-nucleotide DNA that is probably incorporated into the CRISPR leader by a cut-and-paste mechanism. Cas1 alone endonucleolytically cleaves linear ssRNA, ssDNA and short (34 base) dsDNA as well as branched DNA substrates such as Holliday junctions, replication forks and 5'-flap DNA substrates. In vitro catalyzes a concerted transesterification reaction on branched DNA, as would be expected during integration of protospacers into the CRISPR leader sequence; Cas2 is not required in vitro. This reaction requires a 3'-OH group at the branch point. Genetic interactions suggest Cas1 interacts with components of the RecBC and RuvB DNA repair systems. The polypeptide is CRISPR-associated endonuclease Cas1 (ygbT) (Escherichia coli (strain K12)).